Here is a 197-residue protein sequence, read N- to C-terminus: MKAIILAGGQSERFGAPKAFAEIDGKMFYEQIITVLDSMNMFNEIIISSNETLASEFKGARVIVDDSEHKNKGPLSGIYSVMKQDFESELFFVISVDTPLITAKAISQLYQFMVEHVIEDQLDIAGFKEGNHPIPTIAFYSPNCLPIIARALESDDYSMRHVYQQTASDWIDVSSVDDDTEWYKNINYPQDLESIKK.

Residues 6–8 (LAG), K18, D65, and D97 contribute to the GTP site. D97 is a binding site for Mg(2+).

Belongs to the MobA family. Mg(2+) serves as cofactor.

It localises to the cytoplasm. It catalyses the reaction Mo-molybdopterin + GTP + H(+) = Mo-molybdopterin guanine dinucleotide + diphosphate. In terms of biological role, transfers a GMP moiety from GTP to Mo-molybdopterin (Mo-MPT) cofactor (Moco or molybdenum cofactor) to form Mo-molybdopterin guanine dinucleotide (Mo-MGD) cofactor. This chain is Probable molybdenum cofactor guanylyltransferase, found in Staphylococcus carnosus (strain TM300).